The following is a 398-amino-acid chain: Nuclear egress protein 2 (398 aa).

Residues 1–359 (MEMNKVLHQD…GPSRPQSGPW (359 aa)) are Perinuclear space-facing. 2 disordered regions span residues 202–246 (ALTR…PPPP) and 306–334 (LEEHVSRRRGVSTHHRHPPSPPCTPSLER). The segment covering 215–224 (ASPPPPPPRH) has biased composition (pro residues). The residue at position 216 (Ser216) is a Phosphoserine. The segment covering 225 to 240 (PSCSPTMVAAGGAAAG) has biased composition (low complexity). Residues 311-323 (SRRRGVSTHHRHP) are compositionally biased toward basic residues. A helical transmembrane segment spans residues 360–382 (LPARFATLGPLVLALLLVLALLW). Over 383–398 (RGHGQSSSPTRSAHRD) the chain is Nuclear.

It belongs to the herpesviridae NEC2 protein family. Forms a heterohexameric complex with NEC1. Interacts with host UBA7 and RNF170; this interaction promotes UBA7 proteasomal degradation. Phosphorylated. Phosphorylation by viral kinase UL97 at Ser-216 plays an important role for correct viral nuclear egress complex (NEC) localization.

It localises to the host nucleus inner membrane. Its function is as follows. Plays an essential role in virion nuclear egress, the first step of virion release from infected cell. Within the host nucleus, NEC1 interacts with the newly formed capsid through the vertexes and directs it to the inner nuclear membrane by associating with NEC2. Induces the budding of the capsid at the inner nuclear membrane as well as its envelopment into the perinuclear space. There, the NEC1/NEC2 complex promotes the fusion of the enveloped capsid with the outer nuclear membrane and the subsequent release of the viral capsid into the cytoplasm where it will reach the secondary budding sites in the host Golgi or trans-Golgi network. Inhibits host ISGylation and subsequent innate antiviral response by targeting host UBA7 for proteasomal degradation. This is Nuclear egress protein 2 from Homo sapiens (Human).